We begin with the raw amino-acid sequence, 665 residues long: Target of rapamycin complex 2 subunit sin1 (665 aa).

Serine 62 is modified (phosphoserine). 2 stretches are compositionally biased toward polar residues: residues 65 to 83 (IVAN…TKQV) and 100 to 109 (YATSDLSESS). The disordered stretch occupies residues 65–112 (IVANDTVSNVRKPSDTKQVNGAGGQVNHSRAEDSDYATSDLSESSDVG). Position 133 is a phosphoserine (serine 133). In terms of domain architecture, CRIM spans 255–392 (TSALRALLEH…ATPAQIKENQ (138 aa)). The segment at 395–433 (YPFKSKHPTSIPEANNKTHIRHTSSTSSQSQKQAQDVKD) is disordered. A phosphoserine mark is found at serine 404, serine 490, serine 502, and serine 530. The disordered stretch occupies residues 517–537 (RDKKGSTQQLPTSSPQNSVYG). Positions 522-536 (STQQLPTSSPQNSVY) are enriched in polar residues. Residues 558 to 659 (TYQEFLVWKR…IVSRIRALMN (102 aa)) form the SIN1-type PH domain.

This sequence belongs to the SIN1 family. In terms of assembly, the target of rapamycin complex 2 (TORC2) is composed of at least bit61, pop3/wat1, sin1, ste20 and tor1. Interacts with the sty1 MAP kinase. In terms of processing, phosphorylated; under environmental stress. Either Ser-61 or Ser-62 and Ser-298, Ser-299 or Ser-301 are phosphorylated as well.

Component of the mechanistic target of rapamycin complex 2 (mTORC2), which regulates multiple cellular processes to control cell growth in response to environmental signals. In response to signals, TORC2 phosphorylates AGC protein kinase family members, such as gad8. TORC2 is required for cell survival under various stress conditions. TORC2 positively controls G1 cell-cycle arrest, sexual development and amino acid uptake. Positively regulates amino acid uptake through the control of expression of amino acid permeases. Within the mTORC2 complex, sin1 acts as a substrate adapter which recognizes and binds AGC protein kinase family members for phosphorylation by tor1. The sequence is that of Target of rapamycin complex 2 subunit sin1 from Schizosaccharomyces pombe (strain 972 / ATCC 24843) (Fission yeast).